A 62-amino-acid polypeptide reads, in one-letter code: Large ribosomal subunit protein bL28 (62 aa).

Belongs to the bacterial ribosomal protein bL28 family.

This Helicobacter hepaticus (strain ATCC 51449 / 3B1) protein is Large ribosomal subunit protein bL28.